Reading from the N-terminus, the 390-residue chain is Phosphopentomutase (390 aa).

Positions 10, 284, 289, 325, 326, and 337 each coordinate Mn(2+).

It belongs to the phosphopentomutase family. Mn(2+) is required as a cofactor.

The protein resides in the cytoplasm. The enzyme catalyses 2-deoxy-alpha-D-ribose 1-phosphate = 2-deoxy-D-ribose 5-phosphate. It catalyses the reaction alpha-D-ribose 1-phosphate = D-ribose 5-phosphate. It participates in carbohydrate degradation; 2-deoxy-D-ribose 1-phosphate degradation; D-glyceraldehyde 3-phosphate and acetaldehyde from 2-deoxy-alpha-D-ribose 1-phosphate: step 1/2. In terms of biological role, isomerase that catalyzes the conversion of deoxy-ribose 1-phosphate (dRib-1-P) and ribose 1-phosphate (Rib-1-P) to deoxy-ribose 5-phosphate (dRib-5-P) and ribose 5-phosphate (Rib-5-P), respectively. In Clostridioides difficile (strain 630) (Peptoclostridium difficile), this protein is Phosphopentomutase.